A 98-amino-acid polypeptide reads, in one-letter code: MPSIYINIFLAFILALLGMLVYRSHLMSSLLCLEGMMLSLFVLITLTALNTHFTLSFMFPIILLVFAACEAAVGLALLVMVSNTYGMDYVQNLNLLQC.

Transmembrane regions (helical) follow at residues 1 to 21 (MPSI…GMLV), 29 to 49 (SLLC…LTAL), and 61 to 81 (IILL…LVMV).

The protein belongs to the complex I subunit 4L family. Core subunit of respiratory chain NADH dehydrogenase (Complex I) which is composed of 45 different subunits.

It localises to the mitochondrion inner membrane. The catalysed reaction is a ubiquinone + NADH + 5 H(+)(in) = a ubiquinol + NAD(+) + 4 H(+)(out). Core subunit of the mitochondrial membrane respiratory chain NADH dehydrogenase (Complex I) which catalyzes electron transfer from NADH through the respiratory chain, using ubiquinone as an electron acceptor. Part of the enzyme membrane arm which is embedded in the lipid bilayer and involved in proton translocation. The chain is NADH-ubiquinone oxidoreductase chain 4L (MT-ND4L) from Oryctolagus cuniculus (Rabbit).